A 587-amino-acid polypeptide reads, in one-letter code: Pyruvate decarboxylase 3 (587 aa).

The substrate site is built by Asp-48 and His-135. Positions 415 to 496 (DSWFNCQKLR…FLINNGGYTI (82 aa)) are thiamine pyrophosphate binding. The Mg(2+) site is built by Asp-464, Asn-491, and Gly-493. Glu-497 provides a ligand contact to substrate.

This sequence belongs to the TPP enzyme family. As to quaternary structure, homotetramer. The cofactor is a metal cation. Requires thiamine diphosphate as cofactor.

It carries out the reaction a 2-oxocarboxylate + H(+) = an aldehyde + CO2. The sequence is that of Pyruvate decarboxylase 3 (PDC3) from Oryza sativa subsp. japonica (Rice).